The chain runs to 120 residues: Ubiquitin domain-containing protein TINCR (120 aa).

The 70-residue stretch at Y14–V83 folds into the Ubiquitin-like domain.

As to expression, detected in stratum corneum (at protein level).

The sequence is that of Ubiquitin domain-containing protein TINCR from Homo sapiens (Human).